Here is a 121-residue protein sequence, read N- to C-terminus: Large ribosomal subunit protein bL12 (121 aa).

Belongs to the bacterial ribosomal protein bL12 family. Homodimer. Part of the ribosomal stalk of the 50S ribosomal subunit. Forms a multimeric L10(L12)X complex, where L10 forms an elongated spine to which 2 to 4 L12 dimers bind in a sequential fashion. Binds GTP-bound translation factors.

Functionally, forms part of the ribosomal stalk which helps the ribosome interact with GTP-bound translation factors. Is thus essential for accurate translation. The polypeptide is Large ribosomal subunit protein bL12 (Serratia proteamaculans (strain 568)).